The sequence spans 374 residues: UPF0674 endoplasmic reticulum membrane protein C2G5.01 (374 aa).

Residues 49–68 (FRLEFVILACFFLYVFSFIT) form a helical membrane-spanning segment. A glycan (N-linked (GlcNAc...) asparagine) is linked at Asn287. The tract at residues 335-374 (KAAKKKVKSSGDISKLSESDQKKRMERERQRKMRRRAKKM) is disordered. The segment covering 349-363 (KLSESDQKKRMERER) has biased composition (basic and acidic residues). Residues 364–374 (QRKMRRRAKKM) are compositionally biased toward basic residues.

The protein belongs to the UPF0674 family.

It is found in the endoplasmic reticulum membrane. The chain is UPF0674 endoplasmic reticulum membrane protein C2G5.01 from Schizosaccharomyces pombe (strain 972 / ATCC 24843) (Fission yeast).